The sequence spans 293 residues: Probable metal transport system membrane protein CPn_0543/CP_0209/CPj0543/CpB0565 (293 aa).

Transmembrane regions (helical) follow at residues Leu12–Met32, Ile41–Trp61, Leu68–Gly88, Leu101–Pro121, Pro140–Cys160, Leu183–Met203, and Phe253–Val273.

This sequence belongs to the ABC-3 integral membrane protein family.

The protein localises to the cell inner membrane. Its function is as follows. Part of an ATP-driven transport system CPn_0541/CPn_0542/CPn_0543 for a metal. This chain is Probable metal transport system membrane protein CPn_0543/CP_0209/CPj0543/CpB0565, found in Chlamydia pneumoniae (Chlamydophila pneumoniae).